The following is a 225-amino-acid chain: UPF0758 protein Vapar_4033 (225 aa).

One can recognise an MPN domain in the interval 103–225 (VFDSPGTVKQ…SYSMAEKGLL (123 aa)). Zn(2+) contacts are provided by histidine 174, histidine 176, and aspartate 187. Residues 174–187 (HNHPSGSIEPSRAD) carry the JAMM motif motif.

This sequence belongs to the UPF0758 family.

The protein is UPF0758 protein Vapar_4033 of Variovorax paradoxus (strain S110).